We begin with the raw amino-acid sequence, 95 residues long: Fluoride-specific ion channel FluC 1 (95 aa).

3 consecutive transmembrane segments (helical) span residues 23-43, 49-69, and 70-90; these read LIDAPLALLGINLLGSFLMGW, LWGTGFLGGFTSFSAFALLMF, and DGAYLYAAVTVIGCVAAWLLG. Na(+) is bound by residues Gly56 and Thr59.

It belongs to the fluoride channel Fluc/FEX (TC 1.A.43) family.

It is found in the cell membrane. It catalyses the reaction fluoride(in) = fluoride(out). Na(+) is not transported, but it plays an essential structural role and its presence is essential for fluoride channel function. Its function is as follows. Fluoride-specific ion channel. Important for reducing fluoride concentration in the cell, thus reducing its toxicity. In Corynebacterium diphtheriae (strain ATCC 700971 / NCTC 13129 / Biotype gravis), this protein is Fluoride-specific ion channel FluC 1.